Here is a 391-residue protein sequence, read N- to C-terminus: Alkanesulfonate monooxygenase (391 aa).

Belongs to the SsuD family.

It carries out the reaction an alkanesulfonate + FMNH2 + O2 = an aldehyde + FMN + sulfite + H2O + 2 H(+). Catalyzes the desulfonation of aliphatic sulfonates. The protein is Alkanesulfonate monooxygenase of Rhodopseudomonas palustris (strain ATCC BAA-98 / CGA009).